Consider the following 201-residue polypeptide: Inosine triphosphate pyrophosphatase (201 aa).

ITP is bound at residue 16-21; sequence TGNAKK. Glutamate 44 contributes to the Mg(2+) binding site. Residues lysine 56, 72–73, lysine 89, 148–151, lysine 171, and 176–177 each bind ITP; these read DT, FGWD, and HR.

It belongs to the HAM1 NTPase family. As to quaternary structure, homodimer. Mg(2+) serves as cofactor. The cofactor is Mn(2+).

The protein resides in the cytoplasm. It carries out the reaction ITP + H2O = IMP + diphosphate + H(+). It catalyses the reaction dITP + H2O = dIMP + diphosphate + H(+). The catalysed reaction is XTP + H2O = XMP + diphosphate + H(+). Functionally, pyrophosphatase that hydrolyzes non-canonical purine nucleotides such as inosine triphosphate (ITP), deoxyinosine triphosphate (dITP) or xanthosine 5'-triphosphate (XTP) to their respective monophosphate derivatives. The enzyme does not distinguish between the deoxy- and ribose forms. Probably excludes non-canonical purines from RNA and DNA precursor pools, thus preventing their incorporation into RNA and DNA and avoiding chromosomal lesions. This Sorghum bicolor (Sorghum) protein is Inosine triphosphate pyrophosphatase.